A 496-amino-acid chain; its full sequence is Glycerol kinase (496 aa).

T12 contributes to the ADP binding site. Residues T12, T13, and S14 each contribute to the ATP site. T12 lines the sn-glycerol 3-phosphate pocket. R16 is a binding site for ADP. R82, E83, and Y134 together coordinate sn-glycerol 3-phosphate. Residues R82, E83, and Y134 each contribute to the glycerol site. H230 is subject to Phosphohistidine; by HPr. D244 is a binding site for sn-glycerol 3-phosphate. The glycerol site is built by D244 and Q245. ADP-binding residues include T266 and G309. T266, G309, Q313, and G410 together coordinate ATP. ADP is bound by residues G410 and N414.

Belongs to the FGGY kinase family. Homotetramer and homodimer (in equilibrium). The phosphoenolpyruvate-dependent sugar phosphotransferase system (PTS), including enzyme I, and histidine-containing protein (HPr) are required for the phosphorylation, which leads to the activation of the enzyme.

The catalysed reaction is glycerol + ATP = sn-glycerol 3-phosphate + ADP + H(+). It participates in polyol metabolism; glycerol degradation via glycerol kinase pathway; sn-glycerol 3-phosphate from glycerol: step 1/1. With respect to regulation, activated by phosphorylation and inhibited by fructose 1,6-bisphosphate (FBP). Its function is as follows. Key enzyme in the regulation of glycerol uptake and metabolism. Catalyzes the phosphorylation of glycerol to yield sn-glycerol 3-phosphate. The polypeptide is Glycerol kinase (Bacillus licheniformis (strain ATCC 14580 / DSM 13 / JCM 2505 / CCUG 7422 / NBRC 12200 / NCIMB 9375 / NCTC 10341 / NRRL NRS-1264 / Gibson 46)).